The chain runs to 1213 residues: Formin (1213 aa).

5 disordered regions span residues 1–24 (MEGGNAGCSRQLPERAGPAESEPD), 66–111 (QANN…EPEP), 144–169 (VHTTSDTESDGESKDPDADETGTSKC), 183–216 (GNNQSKEESDSEGYGHSDDTVGRDDTELHPPISQ), and 357–489 (DVSK…PKAN). 2 stretches are compositionally biased toward basic and acidic residues: residues 187 to 210 (SKEESDSEGYGHSDDTVGRDDTEL) and 431 to 464 (EAIKRKMRNEKESLKAVFERSKSKPGDGPSDKSP). 2 coiled-coil regions span residues 428-450 (SELEAIKRKMRNEKESLKAVFER) and 503-572 (EYQA…IGVS). The tract at residues 624–774 (ISTQGENKDS…PRKPAIEPSR (151 aa)) is disordered. The span at 636 to 647 (VPSSESVLSCQP) shows a compositional bias: polar residues. 3 stretches are compositionally biased toward pro residues: residues 650–672 (MLPPSPPPPPPPPPPPPPPPPPF), 680–689 (LVPPPPPLPT), and 718–751 (PAPPAPPPLPGLGPPVPPPLPGSGLPPPPPPPGP). The region spanning 652–751 (PPSPPPPPPP…LPPPPPPPGP (100 aa)) is the FH1 domain. Residues 755–764 (FNSTLSSSQG) are compositionally biased toward polar residues. One can recognise an FH2 domain in the interval 766-1182 (RKPAIEPSRP…KVAQQSVSKL (417 aa)). Positions 1050 to 1125 (FQASQVKFED…ENAQKCFEET (76 aa)) form a coiled coil. Residues 1193–1213 (INPTASLKERLRQKEANVNAN) are disordered.

This sequence belongs to the formin homology family. Cappuccino subfamily. Present in the adult brain, kidney, brain, heart and intestine and throughout the embryo.

Its subcellular location is the nucleus. Is important for morphogenesis of limb and kidney and may be involved in determining dorsoventral neural tube polarity and motor neuron induction. It may also have a function in differentiated cells or be involved in maintaining specific differentiated states. The protein is Formin (LD) of Gallus gallus (Chicken).